Reading from the N-terminus, the 481-residue chain is Argininosuccinate lyase (481 aa).

The protein belongs to the lyase 1 family. Argininosuccinate lyase subfamily.

The protein localises to the cytoplasm. The catalysed reaction is 2-(N(omega)-L-arginino)succinate = fumarate + L-arginine. The protein operates within amino-acid biosynthesis; L-arginine biosynthesis; L-arginine from L-ornithine and carbamoyl phosphate: step 3/3. This Methanococcus maripaludis (strain C7 / ATCC BAA-1331) protein is Argininosuccinate lyase.